We begin with the raw amino-acid sequence, 274 residues long: 3-methyl-2-oxobutanoate hydroxymethyltransferase (274 aa).

2 residues coordinate Mg(2+): Asp54 and Asp93. 3-methyl-2-oxobutanoate-binding positions include 54 to 55 (DS), Asp93, and Lys121. Glu123 contributes to the Mg(2+) binding site. Catalysis depends on Glu190, which acts as the Proton acceptor.

The protein belongs to the PanB family. Homodecamer; pentamer of dimers. Mg(2+) is required as a cofactor.

The protein localises to the cytoplasm. The enzyme catalyses 3-methyl-2-oxobutanoate + (6R)-5,10-methylene-5,6,7,8-tetrahydrofolate + H2O = 2-dehydropantoate + (6S)-5,6,7,8-tetrahydrofolate. It functions in the pathway cofactor biosynthesis; (R)-pantothenate biosynthesis; (R)-pantoate from 3-methyl-2-oxobutanoate: step 1/2. Its function is as follows. Catalyzes the reversible reaction in which hydroxymethyl group from 5,10-methylenetetrahydrofolate is transferred onto alpha-ketoisovalerate to form ketopantoate. This Ralstonia nicotianae (strain ATCC BAA-1114 / GMI1000) (Ralstonia solanacearum) protein is 3-methyl-2-oxobutanoate hydroxymethyltransferase.